The following is a 237-amino-acid chain: Phosphoribosylaminoimidazole-succinocarboxamide synthase (237 aa).

It belongs to the SAICAR synthetase family.

It catalyses the reaction 5-amino-1-(5-phospho-D-ribosyl)imidazole-4-carboxylate + L-aspartate + ATP = (2S)-2-[5-amino-1-(5-phospho-beta-D-ribosyl)imidazole-4-carboxamido]succinate + ADP + phosphate + 2 H(+). The protein operates within purine metabolism; IMP biosynthesis via de novo pathway; 5-amino-1-(5-phospho-D-ribosyl)imidazole-4-carboxamide from 5-amino-1-(5-phospho-D-ribosyl)imidazole-4-carboxylate: step 1/2. This chain is Phosphoribosylaminoimidazole-succinocarboxamide synthase, found in Listeria monocytogenes serotype 4b (strain CLIP80459).